Consider the following 452-residue polypeptide: Probable alpha-galactosidase B (452 aa).

Residues 1-24 (MLHRATTTAAAAAAAALLLCPVQA) form the signal peptide. A disulfide bridge links Cys47 with Cys79. N-linked (GlcNAc...) asparagine glycans are attached at residues Asn87 and Asn138. The cysteines at positions 129 and 159 are disulfide-linked. Asp157 functions as the Nucleophile in the catalytic mechanism. Asn184 is a glycosylation site (N-linked (GlcNAc...) asparagine). Substrate is bound at residue 231 to 235 (DWGQA). Asp253 functions as the Proton donor in the catalytic mechanism. Residues Asn292, Asn391, Asn409, and Asn410 are each glycosylated (N-linked (GlcNAc...) asparagine).

This sequence belongs to the glycosyl hydrolase 27 family.

Its subcellular location is the secreted. The catalysed reaction is Hydrolysis of terminal, non-reducing alpha-D-galactose residues in alpha-D-galactosides, including galactose oligosaccharides, galactomannans and galactolipids.. Hydrolyzes a variety of simple alpha-D-galactoside as well as more complex molecules such as oligosaccharides and polysaccharides. The sequence is that of Probable alpha-galactosidase B from Talaromyces emersonii (Thermophilic fungus).